The following is a 417-amino-acid chain: D-amino acid dehydrogenase (417 aa).

3–17 (IVVLGGGVVGVTSAW) provides a ligand contact to FAD.

This sequence belongs to the DadA oxidoreductase family. FAD serves as cofactor.

The catalysed reaction is a D-alpha-amino acid + A + H2O = a 2-oxocarboxylate + AH2 + NH4(+). It functions in the pathway amino-acid degradation; D-alanine degradation; NH(3) and pyruvate from D-alanine: step 1/1. Functionally, oxidative deamination of D-amino acids. In Aeromonas hydrophila subsp. hydrophila (strain ATCC 7966 / DSM 30187 / BCRC 13018 / CCUG 14551 / JCM 1027 / KCTC 2358 / NCIMB 9240 / NCTC 8049), this protein is D-amino acid dehydrogenase.